Here is a 318-residue protein sequence, read N- to C-terminus: Replication factor C small subunit (318 aa).

An ATP-binding site is contributed by 43–50; it reads GSVGTGKT.

The protein belongs to the activator 1 small subunits family. RfcS subfamily. Heteromultimer composed of small subunits (RfcS) and large subunits (RfcL).

In terms of biological role, part of the RFC clamp loader complex which loads the PCNA sliding clamp onto DNA. The sequence is that of Replication factor C small subunit from Thermoplasma acidophilum (strain ATCC 25905 / DSM 1728 / JCM 9062 / NBRC 15155 / AMRC-C165).